We begin with the raw amino-acid sequence, 114 residues long: TYRO protein tyrosine kinase-binding protein (114 aa).

The first 27 residues, 1–27 (MGAPEPSWCFLFLPVLLTVGGLSPVQA), serve as a signal peptide directing secretion. At 28–42 (QSDNYPGCECSSVSP) the chain is on the extracellular side. Residues 43–63 (GVLAGIVLGDLVLTLLIALAV) form a helical membrane-spanning segment. Residue aspartate 52 participates in Ca(2+) binding. Residues 64-114 (YSLGRLVSRGRGTADGTRKQHMAETESPYQELQGQRPEVYSDLNTQRQYYR) lie on the Cytoplasmic side of the membrane. The interval 72–114 (RGRGTADGTRKQHMAETESPYQELQGQRPEVYSDLNTQRQYYR) is disordered. The ITAM domain occupies 81–109 (RKQHMAETESPYQELQGQRPEVYSDLNTQ). Residues tyrosine 92 and tyrosine 103 each carry the phosphotyrosine modification. The segment covering 105–114 (DLNTQRQYYR) has biased composition (polar residues).

The protein belongs to the TYROBP family. In terms of assembly, homodimer; disulfide-linked. Homotrimer; disulfide-linked. Homotetramer; disulfide-linked. Homotrimers and homotetramers form when low levels of partner receptors are available and is competitive with assembly with interacting receptors. They may represent alternative oligomerization states or may be intermediates in the receptor assembly process. Binding of a metal cation aids in homooligomerization through coordination of the metal ion by the subunits of the oligomer. Interacts with TREM1. Interacts with TREM2. Interacts with CLECSF5. Interacts with CD300LB and CD300C2. Interacts with CD300E. Interacts (via ITAM domain) with SYK (via SH2 domains); activates SYK mediating neutrophils and macrophages integrin-mediated activation. Interacts with KLRC2. Interacts with CD300H. Interacts with KLRD1. Interacts with SIGLEC1. Following ligand binding by associated receptors, tyrosine phosphorylated in the ITAM domain which leads to activation of additional tyrosine kinases and subsequent cell activation.

Its subcellular location is the cell membrane. In terms of biological role, adapter protein which non-covalently associates with activating receptors found on the surface of a variety of immune cells to mediate signaling and cell activation following ligand binding by the receptors. TYROBP is tyrosine-phosphorylated in the ITAM domain following ligand binding by the associated receptors which leads to activation of additional tyrosine kinases and subsequent cell activation. Also has an inhibitory role in some cells. Non-covalently associates with activating receptors of the CD300 family to mediate cell activation. Also mediates cell activation through association with activating receptors of the CD200R family. Required for neutrophil activation mediated by integrin. Required for the activation of myeloid cells mediated by the CLEC5A/MDL1 receptor. Associates with natural killer (NK) cell receptors such as the KLRD1/KLRC2 heterodimer to mediate NK cell activation. Associates with TREM1 to mediate activation of neutrophils and monocytes. Associates with TREM2 on monocyte-derived dendritic cells to mediate up-regulation of chemokine receptor CCR7 and dendritic cell maturation and survival. PAssociation with TREM2 mediates cytokine-induced formation of multinucleated giant cells which are formed by the fusion of macrophages. Stabilizes the TREM2 C-terminal fragment (TREM2-CTF) produced by TREM2 ectodomain shedding which suppresses the release of pro-inflammatory cytokines. In microglia, required with TREM2 for phagocytosis of apoptotic neurons. Required with ITGAM/CD11B in microglia to control production of microglial superoxide ions which promote the neuronal apoptosis that occurs during brain development. Promotes pro-inflammatory responses in microglia following nerve injury which accelerates degeneration of injured neurons. ositively regulates the expression of the IRAK3/IRAK-M kinase and IL10 production by liver dendritic cells and inhibits their T cell allosimulatory ability. Negatively regulates B cell proliferation. Required for CSF1-mediated osteoclast cytoskeletal organization. Positively regulates multinucleation during osteoclast development. The polypeptide is TYRO protein tyrosine kinase-binding protein (Rattus norvegicus (Rat)).